We begin with the raw amino-acid sequence, 395 residues long: Imidazolonepropionase (395 aa).

Positions 63 and 65 each coordinate Fe(3+). 2 residues coordinate Zn(2+): His-63 and His-65. Residues Arg-72, Tyr-135, and His-168 each contribute to the 4-imidazolone-5-propanoate site. N-formimidoyl-L-glutamate is bound at residue Tyr-135. His-233 contacts Fe(3+). His-233 lines the Zn(2+) pocket. Residue Gln-236 coordinates 4-imidazolone-5-propanoate. Asp-308 is a Fe(3+) binding site. Asp-308 lines the Zn(2+) pocket. Positions 310 and 312 each coordinate N-formimidoyl-L-glutamate. 4-imidazolone-5-propanoate is bound at residue Thr-313.

The protein belongs to the metallo-dependent hydrolases superfamily. HutI family. It depends on Zn(2+) as a cofactor. Fe(3+) serves as cofactor.

The protein resides in the cytoplasm. The enzyme catalyses 4-imidazolone-5-propanoate + H2O = N-formimidoyl-L-glutamate. It functions in the pathway amino-acid degradation; L-histidine degradation into L-glutamate; N-formimidoyl-L-glutamate from L-histidine: step 3/3. Functionally, catalyzes the hydrolytic cleavage of the carbon-nitrogen bond in imidazolone-5-propanoate to yield N-formimidoyl-L-glutamate. It is the third step in the universal histidine degradation pathway. The chain is Imidazolonepropionase from Cereibacter sphaeroides (strain ATCC 17023 / DSM 158 / JCM 6121 / CCUG 31486 / LMG 2827 / NBRC 12203 / NCIMB 8253 / ATH 2.4.1.) (Rhodobacter sphaeroides).